The sequence spans 263 residues: Purine nucleoside phosphorylase SACOL1200 (263 aa).

Zn(2+) is bound by residues His-79, Cys-124, and His-141.

It belongs to the purine nucleoside phosphorylase YfiH/LACC1 family. As to quaternary structure, homodimer. It depends on Cu(2+) as a cofactor. Zn(2+) serves as cofactor.

It catalyses the reaction adenosine + phosphate = alpha-D-ribose 1-phosphate + adenine. The catalysed reaction is S-methyl-5'-thioadenosine + phosphate = 5-(methylsulfanyl)-alpha-D-ribose 1-phosphate + adenine. The enzyme catalyses inosine + phosphate = alpha-D-ribose 1-phosphate + hypoxanthine. It carries out the reaction adenosine + H2O + H(+) = inosine + NH4(+). Functionally, purine nucleoside enzyme that catalyzes the phosphorolysis of adenosine and inosine nucleosides, yielding D-ribose 1-phosphate and the respective free bases, adenine and hypoxanthine. Also catalyzes the phosphorolysis of S-methyl-5'-thioadenosine into adenine and S-methyl-5-thio-alpha-D-ribose 1-phosphate. Also has adenosine deaminase activity. In Staphylococcus aureus (strain COL), this protein is Purine nucleoside phosphorylase SACOL1200.